We begin with the raw amino-acid sequence, 145 residues long: Protein SprT-like (145 aa).

The SprT-like domain occupies 5–140; it reads DYVREVSLAD…ACGRCHGRLI (136 aa). Residue H64 participates in Zn(2+) binding. E65 is an active-site residue. H68 contributes to the Zn(2+) binding site.

It belongs to the SprT family. The cofactor is Zn(2+).

It localises to the cytoplasm. This Streptococcus equi subsp. zooepidemicus (strain MGCS10565) protein is Protein SprT-like.